An 873-amino-acid chain; its full sequence is MSYFGEHFWGDKNHGFEVLYHCVKQGPVATKELADFIRERANIEETYSKAMAKLSKLASNGTPMGTFAPLWEVFRVSSDKLALCHLELTRKLHDLLKDVLRYGEEQLKTHKKCKEEVLGTVDAVQMLSGVGQLLPKSRENYLSRCMDLERLRRENTSQKEMDKAETKSKKAADSLRRSVDKYNSARADFEIKMLDSALRFQAMEEAHLQHMKALLGSYAHSVEDTHVQIGQVHEEFKQNVENVTVDMLLRKFAESKGTGREKPGPLDFDAYSSAALQEAMKRLRGAKAFRLPGLSRREPRASVDFLESDSGVPPEVDDEGFTVRPDISQNNGAEPPRFSSSDSDFDDEEPRKFYVHIKPAPTRAVACSSEAAAAQLRATAGSLILPPGPGGTMKRHSSRDTSGKPQRPRSAPRTGSCAEKPLASEEPLSKSLFGPPLESAFDHDDFTGSSSLGFTSSPSPFSSSSPENVEDSGLDSPSHAAPGPSPESWVPRPGTPQSPPTCRAQHPEPRGLMPRAPSPGPWGPEGGADSLTPADPTREGLAATLRRPRSRKVSCPLTRSNGDLCRSLSPSPLGSSAPTIPPDRPSFSTQMGHGISRGPSPVVLGSQDALPVATAFTEYVHAYFRGHSPSCLARVTGELTMTFPAGIVRVFSGTPPPPVLSFRLVNTAPVEHFQPNADLIFSDPSQSDPETKDFWLNMAALTEALQHQAEQNPTASYYNLVLLRYQFSRPGPESVPLQMSAHWQCGPTLTRVSVEYSYRAGATAVSTPLTNVQILLPVGEPVTSVRLQPAATWNTEEKRFTWKLPDVCEAGGSGHLSASWQPQSGPSTPSPVAAQFTSEGATLSGLDLELLGGGYRMSLVKRRFATGMYLVSC.

The F-BAR domain occupies 1-248; it reads MSYFGEHFWG…NVENVTVDML (248 aa). Residues 1–275 form a mediates membrane-binding region; that stretch reads MSYFGEHFWG…LDFDAYSSAA (275 aa). The disordered stretch occupies residues 153–172; that stretch reads RENTSQKEMDKAETKSKKAA. Residues 155 to 178 adopt a coiled-coil conformation; sequence NTSQKEMDKAETKSKKAADSLRRS. The mediates interaction with the adaptor protein complex AP-2 stretch occupies residues 267–439; it reads DFDAYSSAAL…KSLFGPPLES (173 aa). Residues S295, S343, and S368 each carry the phosphoserine modification. Positions 302–347 are disordered; that stretch reads SVDFLESDSGVPPEVDDEGFTVRPDISQNNGAEPPRFSSSDSDFDD. 2 disordered regions span residues 381-600 and 813-833; these read GSLI…RGPS and SGHL…SPVA. Residues 447 to 466 show a composition bias toward low complexity; it reads TGSSSLGFTSSPSPFSSSSP. At S518 the chain carries Phosphoserine. Positions 567 to 576 are enriched in low complexity; that stretch reads SLSPSPLGSS. The interval 593–873 is mediates interaction with AGFG1, CALM, DAB2, EPS15, EPS15R, ITSN1 and clathrin; that stretch reads HGISRGPSPV…FATGMYLVSC (281 aa). S600 carries the phosphoserine modification. Residues 609–872 enclose the MHD domain; that stretch reads ALPVATAFTE…RFATGMYLVS (264 aa). Positions 816 to 827 are enriched in polar residues; the sequence is LSASWQPQSGPS.

It belongs to the FCHO family. May oligomerize and form homotetramer. Interacts with AP2A2 and AP2B1; 2 subunits of the adaptor protein complex AP-2. Interacts with DAB2. Interacts with clathrin (CLTC or CLTCL1). Interacts with EPS15, EPS15R and ITSN1. Interacts with AGFG1 and CALM. May interact with ACVR1; linking this receptor to clathrin-mediated endocytosis. In terms of tissue distribution, mainly detected in brain and spleen.

It is found in the membrane. Its subcellular location is the clathrin-coated pit. Its function is as follows. Functions in an early step of clathrin-mediated endocytosis. Has both a membrane binding/bending activity and the ability to recruit proteins essential to the formation of functional clathrin-coated pits. May regulate Bmp signaling by regulating clathrin-mediated endocytosis of Bmp receptors. Involved in the regulation of T-cell poliferation and activation. Affects TCR clustering upon receptor triggering and modulates its internalisation, playing a role in TCR-dependent T-cell activation. This Mus musculus (Mouse) protein is F-BAR domain only protein 1.